The primary structure comprises 265 residues: 6-oxopurine nucleoside phosphorylase (265 aa).

Phosphate contacts are provided by residues serine 10, 49–50 (RH), and 82–83 (SA). Disulfide bonds link cysteine 136/cysteine 202 and cysteine 162/cysteine 190. Methionine 187 provides a ligand contact to substrate. Residue threonine 188 coordinates phosphate. 211–213 (NYA) is a binding site for substrate. A disulfide bridge links cysteine 254 with cysteine 256.

Belongs to the PNP/MTAP phosphorylase family. MTAP subfamily. Homohexamer. Dimer of a homotrimer.

The catalysed reaction is a purine D-ribonucleoside + phosphate = a purine nucleobase + alpha-D-ribose 1-phosphate. It catalyses the reaction guanosine + phosphate = alpha-D-ribose 1-phosphate + guanine. It carries out the reaction inosine + phosphate = alpha-D-ribose 1-phosphate + hypoxanthine. It participates in purine metabolism; purine nucleoside salvage. Its function is as follows. Purine nucleoside phosphorylase which is highly specific for 6-oxopurine nucleosides. Cleaves guanosine or inosine to respective bases and sugar-1-phosphate molecules. Involved in purine salvage. This chain is 6-oxopurine nucleoside phosphorylase, found in Pyrococcus furiosus (strain ATCC 43587 / DSM 3638 / JCM 8422 / Vc1).